The chain runs to 439 residues: Histidinol dehydrogenase (439 aa).

3 residues coordinate NAD(+): Tyr125, Gln187, and Asn210. 3 residues coordinate substrate: Thr233, Gln255, and His258. Zn(2+) is bound by residues Gln255 and His258. Residues Glu323 and His324 each act as proton acceptor in the active site. 4 residues coordinate substrate: His324, Asp357, Glu411, and His416. Asp357 is a Zn(2+) binding site. A Zn(2+)-binding site is contributed by His416.

The protein belongs to the histidinol dehydrogenase family. Requires Zn(2+) as cofactor.

The catalysed reaction is L-histidinol + 2 NAD(+) + H2O = L-histidine + 2 NADH + 3 H(+). It participates in amino-acid biosynthesis; L-histidine biosynthesis; L-histidine from 5-phospho-alpha-D-ribose 1-diphosphate: step 9/9. Its function is as follows. Catalyzes the sequential NAD-dependent oxidations of L-histidinol to L-histidinaldehyde and then to L-histidine. This chain is Histidinol dehydrogenase, found in Symbiobacterium thermophilum (strain DSM 24528 / JCM 14929 / IAM 14863 / T).